The primary structure comprises 344 residues: Methionine import ATP-binding protein MetN 1 (344 aa).

Residues 2 to 241 (IELRNLSQRF…PHHEVTRALI (240 aa)) form the ABC transporter domain. 38 to 45 (GRSGAGKS) is a binding site for ATP.

Belongs to the ABC transporter superfamily. Methionine importer (TC 3.A.1.24) family. As to quaternary structure, the complex is composed of two ATP-binding proteins (MetN), two transmembrane proteins (MetI) and a solute-binding protein (MetQ).

It is found in the cell inner membrane. It catalyses the reaction L-methionine(out) + ATP + H2O = L-methionine(in) + ADP + phosphate + H(+). The enzyme catalyses D-methionine(out) + ATP + H2O = D-methionine(in) + ADP + phosphate + H(+). Its function is as follows. Part of the ABC transporter complex MetNIQ involved in methionine import. Responsible for energy coupling to the transport system. In Burkholderia ambifaria (strain ATCC BAA-244 / DSM 16087 / CCUG 44356 / LMG 19182 / AMMD) (Burkholderia cepacia (strain AMMD)), this protein is Methionine import ATP-binding protein MetN 1.